The primary structure comprises 193 residues: Dense granule protein 2 (193 aa).

Asparagine 4 carries N-linked (GlcNAc...) asparagine glycosylation. The chain crosses the membrane as a helical span at residues 14 to 34; the sequence is FSPLTVVMLAVTLVAFMGVPL. Asparagine 74 is a glycosylation site (N-linked (GlcNAc...) asparagine). Residues 75–140 are disordered; it reads SSELAGSRDK…APKPVPVRSA (66 aa). A compositionally biased stretch (acidic residues) spans 88 to 98; sequence EAEEEAAEVET. A helical membrane pass occupies residues 153-173; the sequence is HRVIGTAVIAAVVAALLWKFS. The segment at 174 to 193 is disordered; the sequence is RRRSGAPREGGENENGGEEK.

Belongs to the Gra6 family.

It localises to the membrane. The chain is Dense granule protein 2 (DG2) from Neospora caninum (Coccidian parasite).